Consider the following 373-residue polypeptide: uncharacterized protein (373 aa).

The helical transmembrane segment at 180 to 202 threads the bilayer; it reads YYVVALGTLALGSILGYTAKYVW.

Its subcellular location is the membrane. This is an uncharacterized protein from Rickettsia prowazekii (strain Madrid E).